The following is a 482-amino-acid chain: tRNA sulfurtransferase (482 aa).

One can recognise a THUMP domain in the interval 61-165 (LAIRDALTRI…DDRLLLIKGR (105 aa)). Residues 183-184 (LI), lysine 265, glycine 287, and glutamine 296 contribute to the ATP site. A disulfide bond links cysteine 344 and cysteine 456. Residues 404-482 (FGPNDVILDI…GFNNVKVYRP (79 aa)) enclose the Rhodanese domain. Catalysis depends on cysteine 456, which acts as the Cysteine persulfide intermediate.

Belongs to the ThiI family.

It is found in the cytoplasm. It carries out the reaction [ThiI sulfur-carrier protein]-S-sulfanyl-L-cysteine + a uridine in tRNA + 2 reduced [2Fe-2S]-[ferredoxin] + ATP + H(+) = [ThiI sulfur-carrier protein]-L-cysteine + a 4-thiouridine in tRNA + 2 oxidized [2Fe-2S]-[ferredoxin] + AMP + diphosphate. The catalysed reaction is [ThiS sulfur-carrier protein]-C-terminal Gly-Gly-AMP + S-sulfanyl-L-cysteinyl-[cysteine desulfurase] + AH2 = [ThiS sulfur-carrier protein]-C-terminal-Gly-aminoethanethioate + L-cysteinyl-[cysteine desulfurase] + A + AMP + 2 H(+). It functions in the pathway cofactor biosynthesis; thiamine diphosphate biosynthesis. In terms of biological role, catalyzes the ATP-dependent transfer of a sulfur to tRNA to produce 4-thiouridine in position 8 of tRNAs, which functions as a near-UV photosensor. Also catalyzes the transfer of sulfur to the sulfur carrier protein ThiS, forming ThiS-thiocarboxylate. This is a step in the synthesis of thiazole, in the thiamine biosynthesis pathway. The sulfur is donated as persulfide by IscS. The polypeptide is tRNA sulfurtransferase (Shigella boydii serotype 4 (strain Sb227)).